Reading from the N-terminus, the 889-residue chain is Envelope glycoprotein gp160 (889 aa).

A signal peptide spans 1–22 (MGCLGNQLLIALLLLSASGIYC). The Extracellular segment spans residues 23–704 (VQYVTVFYGI…TSWIKYIQYG (682 aa)). An N-linked (GlcNAc...) asparagine; by host glycan is attached at N37. A disulfide bridge connects residues C44 and C57. N-linked (GlcNAc...) asparagine; by host glycans are attached at residues N70 and N114. 5 cysteine pairs are disulfide-bonded: C101/C226, C108/C217, C113/C175, C239/C269, and C249/C261. The interval 113 to 174 (CNKSETDRWG…TGLEQEPMVS (62 aa)) is V1. A disordered region spans residues 120 to 145 (RWGLTGTPAPTTTQTTTTQASTTPTS). The span at 126 to 145 (TPAPTTTQTTTTQASTTPTS) shows a compositional bias: low complexity. N153, N163, N178, N191, N206, N218, N250, N253, N260, N284, N290, N301, N312, N322, N377, N422, N470, N486, and N489 each carry an N-linked (GlcNAc...) asparagine; by host glycan. Residues 175–217 (CKFNMTGLKRDKKREYNETWYSRDLVCEQNSNETDSKCYMNHC) form a V2 region. The V3 stretch occupies residues 317 to 349 (CRRPGNKTVLPVTIMSGLVFHSQPINERPKQAW). A disulfide bridge connects residues C317 and C350. Disulfide bonds link C401-C469 and C408-C442. The tract at residues 408–442 (CKMNWFLNWVENIQNGSRWTSQNQKERQRRNYVPC) is V4. Positions 485-492 (GNETNITM) are V5. The tract at residues 536 to 556 (GVFVLGFLGFLATAGSAMSAA) is fusion peptide. The immunosuppression stretch occupies residues 599–615 (LQTRVTAIEKYLKDQAQ). 3 N-linked (GlcNAc...) asparagine; by host glycosylation sites follow: N635, N644, and N660. Positions 648-675 (QEWEKQVNFLEANITQSLEEAQIQQEKN) form a coiled coil. The interval 681–702 (KLNSWDIFGNWFDLTSWIKYIQ) is MPER; binding to GalCer. A helical membrane pass occupies residues 705–725 (VLIVLGVIGLRIVIYVVQMLA). The Cytoplasmic segment spans residues 726 to 889 (RLRQGYRPVF…IRQGLELTLL (164 aa)). The short motif at 731–734 (YRPV) is the YXXV motif; contains endocytosis signal element. C797 carries S-palmitoyl cysteine; by host lipidation. A Di-leucine internalization motif motif is present at residues 888–889 (LL).

As to quaternary structure, the mature envelope protein (Env) consists of a homotrimer of non-covalently associated gp120-gp41 heterodimers. The resulting complex protrudes from the virus surface as a spike. Interacts with host CD4 and CCR5. Gp120 also interacts with the C-type lectins CD209/DC-SIGN and CLEC4M/DC-SIGNR (collectively referred to as DC-SIGN(R)). The mature envelope protein (Env) consists of a homotrimer of non-covalently associated gp120-gp41 heterodimers. The resulting complex protrudes from the virus surface as a spike. In terms of processing, specific enzymatic cleavages in vivo yield mature proteins. Envelope glycoproteins are synthesized as an inactive precursor that is heavily N-glycosylated and processed likely by host cell furin in the Golgi to yield the mature SU and TM proteins. The cleavage site between SU and TM requires the minimal sequence [KR]-X-[KR]-R. Post-translationally, palmitoylation of the transmembrane protein and of Env polyprotein (prior to its proteolytic cleavage) is essential for their association with host cell membrane lipid rafts. Palmitoylation is therefore required for envelope trafficking to classical lipid rafts, but not for viral replication.

It localises to the virion membrane. The protein localises to the host cell membrane. It is found in the host endosome membrane. The surface protein gp120 (SU) attaches the virus to the host lymphoid cell by binding to the primary receptor CD4. This interaction induces a structural rearrangement creating a high affinity binding site for a chemokine coreceptor like CCR5. This peculiar 2 stage receptor-interaction strategy allows gp120 to maintain the highly conserved coreceptor-binding site in a cryptic conformation, protected from neutralizing antibodies. These changes are transmitted to the transmembrane protein gp41 and are thought to activate its fusogenic potential by unmasking its fusion peptide. Its function is as follows. Surface protein gp120 (SU) may target the virus to gut-associated lymphoid tissue (GALT) by binding host ITGA4/ITGB7 (alpha-4/beta-7 integrins), a complex that mediates T-cell migration to the GALT. Interaction between gp120 and ITGA4/ITGB7 would allow the virus to enter GALT early in the infection, infecting and killing most of GALT's resting CD4+ T-cells. This T-cell depletion is believed to be the major insult to the host immune system leading to AIDS. Functionally, the surface protein gp120 is a ligand for CD209/DC-SIGN and CLEC4M/DC-SIGNR, which are respectively found on dendritic cells (DCs), and on endothelial cells of liver sinusoids and lymph node sinuses. These interactions allow capture of viral particles at mucosal surfaces by these cells and subsequent transmission to permissive cells. DCs are professional antigen presenting cells, critical for host immunity by inducing specific immune responses against a broad variety of pathogens. They act as sentinels in various tissues where they take up antigen, process it, and present it to T-cells following migration to lymphoid organs. SIV subverts the migration properties of dendritic cells to gain access to CD4+ T-cells in lymph nodes. Virus transmission to permissive T-cells occurs either in trans (without DCs infection, through viral capture and transmission), or in cis (following DCs productive infection, through the usual CD4-gp120 interaction), thereby inducing a robust infection. In trans infection, bound virions remain infectious over days and it is proposed that they are not degraded, but protected in non-lysosomal acidic organelles within the DCs close to the cell membrane thus contributing to the viral infectious potential during DCs' migration from the periphery to the lymphoid tissues. On arrival at lymphoid tissues, intact virions recycle back to DCs' cell surface allowing virus transmission to CD4+ T-cells. Virion capture also seems to lead to MHC-II-restricted viral antigen presentation, and probably to the activation of SIV-specific CD4+ cells. In terms of biological role, the transmembrane protein gp41 (TM) acts as a class I viral fusion protein. Under the current model, the protein has at least 3 conformational states: pre-fusion native state, pre-hairpin intermediate state, and post-fusion hairpin state. During fusion of viral and target intracellular membranes, the coiled coil regions (heptad repeats) assume a trimer-of-hairpins structure, positioning the fusion peptide in close proximity to the C-terminal region of the ectodomain. The formation of this structure appears to drive apposition and subsequent fusion of viral and target cell membranes. Complete fusion occurs in host cell endosomes. The virus undergoes clathrin-dependent internalization long before endosomal fusion, thus minimizing the surface exposure of conserved viral epitopes during fusion and reducing the efficacy of inhibitors targeting these epitopes. Membranes fusion leads to delivery of the nucleocapsid into the cytoplasm. The envelope glycoprotein gp160 precursor down-modulates cell surface CD4 antigen by interacting with it in the endoplasmic reticulum and blocking its transport to the cell surface. Its function is as follows. The gp120-gp41 heterodimer allows rapid transcytosis of the virus through CD4 negative cells such as simple epithelial monolayers of the intestinal, rectal and endocervical epithelial barriers. Both gp120 and gp41 specifically recognize glycosphingolipids galactosyl-ceramide (GalCer) or 3' sulfo-galactosyl-ceramide (GalS) present in the lipid rafts structures of epithelial cells. Binding to these alternative receptors allows the rapid transcytosis of the virus through the epithelial cells. This transcytotic vesicle-mediated transport of virions from the apical side to the basolateral side of the epithelial cells does not involve infection of the cells themselves. This Simian immunodeficiency virus (isolate PBj14/BCL-3) (SIV-sm) protein is Envelope glycoprotein gp160 (env).